Here is a 246-residue protein sequence, read N- to C-terminus: Isoamyl acetate-hydrolyzing esterase (246 aa).

S46 (nucleophile) is an active-site residue. The active-site Proton donor is D201. The Proton acceptor role is filled by H204.

The protein belongs to the 'GDSL' lipolytic enzyme family. IAH1 subfamily.

The protein resides in the cytoplasm. It carries out the reaction 3-methylbutyl acetate + H2O = 3-methylbutanol + acetate + H(+). The protein is Isoamyl acetate-hydrolyzing esterase (iah1) of Schizosaccharomyces pombe (strain 972 / ATCC 24843) (Fission yeast).